Here is a 409-residue protein sequence, read N- to C-terminus: Elongation factor Tu, chloroplastic (409 aa).

The region spanning 10-214 (KPHVNIGTIG…AVDTYIPTPE (205 aa)) is the tr-type G domain. The G1 stretch occupies residues 19–26 (GHVDHGKT). A GTP-binding site is contributed by 19–26 (GHVDHGKT). Threonine 26 serves as a coordination point for Mg(2+). Positions 60-64 (GITIN) are G2. The interval 81–84 (DCPG) is G3. Residues 81–85 (DCPGH) and 136–139 (NKED) contribute to the GTP site. Residues 136 to 139 (NKED) are G4. Residues 174-176 (SAL) are G5.

It belongs to the TRAFAC class translation factor GTPase superfamily. Classic translation factor GTPase family. EF-Tu/EF-1A subfamily.

It localises to the plastid. The protein localises to the chloroplast. The catalysed reaction is GTP + H2O = GDP + phosphate + H(+). GTP hydrolase that promotes the GTP-dependent binding of aminoacyl-tRNA to the A-site of ribosomes during protein biosynthesis. This Pyropia yezoensis (Susabi-nori) protein is Elongation factor Tu, chloroplastic (tufA).